The primary structure comprises 473 residues: Xylan O-acetyltransferase 14 (473 aa).

The span at 1–17 (MTTTGSTPPRKNRSNVT) shows a compositional bias: polar residues. The disordered stretch occupies residues 1–22 (MTTTGSTPPRKNRSNVTGGEGG). At 1 to 54 (MTTTGSTPPRKNRSNVTGGEGGSLEEYAWRAAGEAAAAKKATRAWGVSVSLRSH) the chain is on the cytoplasmic side. The chain crosses the membrane as a helical; Signal-anchor for type II membrane protein span at residues 55–75 (FSSLVLLLLLLLVALAVSATT). Residues 76-101 (KNGDPAETPHAPPLPPPASIKLPSSS) are disordered. The Lumenal portion of the chain corresponds to 76-473 (KNGDPAETPH…NQLLYAHIVS (398 aa)). 4 disulfides stabilise this stretch: Cys108-Cys159, Cys130-Cys195, Cys139-Cys455, and Cys370-Cys451. Residues 182–184 (GDS) carry the GDS motif motif. Ser184 serves as the catalytic Nucleophile. N-linked (GlcNAc...) asparagine glycosylation is found at Asn209, Asn223, and Asn414. The active-site Proton donor is Asp450. Positions 450–453 (DCIH) match the DXXH motif motif. The Proton acceptor role is filled by His453.

It belongs to the PC-esterase family. TBL subfamily.

It is found in the golgi apparatus membrane. Its function is as follows. Xylan acetyltransferase required for 2-O- and 3-O-monoacetylation of xylosyl residues in xylan. Catalyzes the 2-O-acetylation of xylan, followed by nonenzymatic acetyl migration to the O-3 position, resulting in products that are monoacetylated at both O-2 and O-3 positions. In Oryza sativa subsp. japonica (Rice), this protein is Xylan O-acetyltransferase 14.